The chain runs to 948 residues: Translation initiation factor IF-2 (948 aa).

Disordered stretches follow at residues 61 to 120 (IQAN…PALI), 162 to 243 (KSRE…TQSA), and 255 to 285 (QEKD…SHKI). Positions 68-78 (KNPEQDNKDDL) are enriched in basic and acidic residues. The span at 173–189 (SNTNNANSTNNANNVNN) shows a compositional bias: low complexity. The segment covering 190–207 (AKKEISEVKKQEQEIKRH) has biased composition (basic and acidic residues). Residues 208–219 (ENIKRRTGFRVI) are compositionally biased toward basic residues. Positions 230 to 243 (ENSVAESKKPTQSA) are enriched in polar residues. The tr-type G domain maps to 447–616 (ERPPVVTIMG…LIQADIMELK (170 aa)). The G1 stretch occupies residues 456–463 (GHVDHGKT). Position 456–463 (456–463 (GHVDHGKT)) interacts with GTP. Residues 481 to 485 (GITQH) are G2. Positions 502–505 (DTPG) are G3. GTP contacts are provided by residues 502 to 506 (DTPGH) and 556 to 559 (NKMD). The interval 556–559 (NKMD) is G4. The G5 stretch occupies residues 592–594 (SAK).

Belongs to the TRAFAC class translation factor GTPase superfamily. Classic translation factor GTPase family. IF-2 subfamily.

Its subcellular location is the cytoplasm. One of the essential components for the initiation of protein synthesis. Protects formylmethionyl-tRNA from spontaneous hydrolysis and promotes its binding to the 30S ribosomal subunits. Also involved in the hydrolysis of GTP during the formation of the 70S ribosomal complex. The protein is Translation initiation factor IF-2 of Helicobacter pylori (strain Shi470).